The following is a 334-amino-acid chain: Holliday junction branch migration complex subunit RuvB (334 aa).

A large ATPase domain (RuvB-L) region spans residues 4 to 184 (ADRLIQPQLQ…FGIPLRLEFY (181 aa)). Residues Arg24, Gly65, Lys68, Thr69, Thr70, 131–133 (EDY), Arg174, Tyr184, and Arg221 contribute to the ATP site. Thr69 provides a ligand contact to Mg(2+). Residues 185-255 (NIKDLSTIVT…VADHALDLLD (71 aa)) form a small ATPAse domain (RuvB-S) region. The head domain (RuvB-H) stretch occupies residues 258-334 (NEGFDYMDRK…YQHFQLIKPE (77 aa)). Residues Arg294, Arg313, and Arg318 each coordinate DNA.

It belongs to the RuvB family. As to quaternary structure, homohexamer. Forms an RuvA(8)-RuvB(12)-Holliday junction (HJ) complex. HJ DNA is sandwiched between 2 RuvA tetramers; dsDNA enters through RuvA and exits via RuvB. An RuvB hexamer assembles on each DNA strand where it exits the tetramer. Each RuvB hexamer is contacted by two RuvA subunits (via domain III) on 2 adjacent RuvB subunits; this complex drives branch migration. In the full resolvosome a probable DNA-RuvA(4)-RuvB(12)-RuvC(2) complex forms which resolves the HJ.

The protein resides in the cytoplasm. It carries out the reaction ATP + H2O = ADP + phosphate + H(+). Functionally, the RuvA-RuvB-RuvC complex processes Holliday junction (HJ) DNA during genetic recombination and DNA repair, while the RuvA-RuvB complex plays an important role in the rescue of blocked DNA replication forks via replication fork reversal (RFR). RuvA specifically binds to HJ cruciform DNA, conferring on it an open structure. The RuvB hexamer acts as an ATP-dependent pump, pulling dsDNA into and through the RuvAB complex. RuvB forms 2 homohexamers on either side of HJ DNA bound by 1 or 2 RuvA tetramers; 4 subunits per hexamer contact DNA at a time. Coordinated motions by a converter formed by DNA-disengaged RuvB subunits stimulates ATP hydrolysis and nucleotide exchange. Immobilization of the converter enables RuvB to convert the ATP-contained energy into a lever motion, pulling 2 nucleotides of DNA out of the RuvA tetramer per ATP hydrolyzed, thus driving DNA branch migration. The RuvB motors rotate together with the DNA substrate, which together with the progressing nucleotide cycle form the mechanistic basis for DNA recombination by continuous HJ branch migration. Branch migration allows RuvC to scan DNA until it finds its consensus sequence, where it cleaves and resolves cruciform DNA. This is Holliday junction branch migration complex subunit RuvB from Shewanella putrefaciens (strain CN-32 / ATCC BAA-453).